The chain runs to 84 residues: Putative protein BCE-1 (84 aa).

The protein is Putative protein BCE-1 (BCE1) of Homo sapiens (Human).